The primary structure comprises 164 residues: Small ribosomal subunit protein uS5 (164 aa).

The S5 DRBM domain maps to 9–72 (YQEKLLKISR…AAAKKNIVKI (64 aa)).

This sequence belongs to the universal ribosomal protein uS5 family. Part of the 30S ribosomal subunit. Contacts proteins S4 and S8.

Its function is as follows. With S4 and S12 plays an important role in translational accuracy. Functionally, located at the back of the 30S subunit body where it stabilizes the conformation of the head with respect to the body. This chain is Small ribosomal subunit protein uS5, found in Fusobacterium nucleatum subsp. nucleatum (strain ATCC 25586 / DSM 15643 / BCRC 10681 / CIP 101130 / JCM 8532 / KCTC 2640 / LMG 13131 / VPI 4355).